A 259-amino-acid polypeptide reads, in one-letter code: ATP synthase subunit a (259 aa).

The propeptide at 1–7 (MTNNYIN) is removed in mature form. The next 5 membrane-spanning stretches (helical) occupy residues 36-56 (FSLY…LSIG), 95-115 (YVPL…IGMV), 125-145 (LIYI…LGLF), 164-206 (LVPV…NLVK), and 211-253 (INYF…SYLK).

In terms of assembly, F-type ATP synthases have 2 components, the catalytic core F(1) and the membrane-embedded component F(0), linked together by a central stalk and a peripheral stalk. The central stalk, also called rotor shaft, is often seen as part of F(1). The peripheral stalk is seen as part of F(0). F(0) contains the membrane channel next to the rotor. F-type ATP synthases form dimers but each monomer functions independently in ATP generation. The dimer consists of 18 different polypeptides: ATP1 (subunit alpha, part of F(1), 3 molecules per monomer), ATP2 (subunit beta, part of F(1), 3 molecules per monomer), ATP3 (subunit gamma, part of the central stalk), ATP4 (subunit b, part of the peripheral stalk), ATP5/OSCP (subunit 5/OSCP, part of the peripheral stalk), ATP6 (subunit a, part of the peripheral stalk), ATP7 (subunit d, part of the peripheral stalk), ATP8 (subunit 8, part of the peripheral stalk), OLI1 (subunit c, part of the rotor, 10 molecules per monomer), ATP14 (subunit h, part of the peripheral stalk), ATP15 (subunit epsilon, part of the central stalk), ATP16 (subunit delta, part of the central stalk), ATP17 (subunit f, part of the peripheral stalk), ATP18 (subunit i/j, part of the peripheral stalk). Dimer-specific subunits are ATP19 (subunit k, at interface between monomers), ATP20 (subunit g, at interface between monomers), TIM11 (subunit e, at interface between monomers). Also contains subunit L.

It localises to the mitochondrion inner membrane. Mitochondrial membrane ATP synthase (F(1)F(0) ATP synthase or Complex V) produces ATP from ADP in the presence of a proton gradient across the membrane which is generated by electron transport complexes of the respiratory chain. F-type ATP synthases consist of two structural domains, F(1) - containing the extramembraneous catalytic core, and F(0) - containing the membrane proton channel, linked together by a central stalk and a peripheral stalk. During catalysis, ATP synthesis in the catalytic domain of F(1) is coupled via a rotary mechanism of the central stalk subunits to proton translocation. Key component of the proton channel; it may play a direct role in the translocation of protons across the membrane. This is ATP synthase subunit a from Pichia angusta (Yeast).